The following is a 45-amino-acid chain: Large ribosomal subunit protein bL34 (45 aa).

The segment at 26 to 45 (RAGRSILSARRSKGRSQLSA) is disordered.

This sequence belongs to the bacterial ribosomal protein bL34 family.

The chain is Large ribosomal subunit protein bL34 from Parafrankia sp. (strain EAN1pec).